The primary structure comprises 298 residues: Tyrosine recombinase XerC (298 aa).

The region spanning 2–88 (TDLHTDVERY…ALRSFFDWLV (87 aa)) is the Core-binding (CB) domain. Residues 109–288 (HLPKNIDVDD…DFQHLASVYD (180 aa)) form the Tyr recombinase domain. Active-site residues include Arg-148, Lys-172, His-240, Arg-243, and His-266. Residue Tyr-275 is the O-(3'-phospho-DNA)-tyrosine intermediate of the active site.

This sequence belongs to the 'phage' integrase family. XerC subfamily. In terms of assembly, forms a cyclic heterotetrameric complex composed of two molecules of XerC and two molecules of XerD, in which XerC interacts with XerD via its C-terminal region, XerD interacts with XerC via its C-terminal region and so on.

The protein resides in the cytoplasm. Its activity is regulated as follows. FtsK may regulate the catalytic switch between XerC and XerD in the heterotetrameric complex during the two steps of the recombination process. Its function is as follows. Site-specific tyrosine recombinase, which acts by catalyzing the cutting and rejoining of the recombining DNA molecules. Binds cooperatively to specific DNA consensus sequences that are separated from XerD binding sites by a short central region, forming the heterotetrameric XerC-XerD complex that recombines DNA substrates. The complex is essential to convert dimers of the bacterial chromosome into monomers to permit their segregation at cell division. It also contributes to the segregational stability of plasmids. In the complex XerC specifically exchanges the top DNA strands. The polypeptide is Tyrosine recombinase XerC (Escherichia coli (strain 55989 / EAEC)).